The chain runs to 299 residues: tRNA pseudouridine synthase B (299 aa).

Residue aspartate 45 is the Nucleophile of the active site.

Belongs to the pseudouridine synthase TruB family. Type 1 subfamily.

The enzyme catalyses uridine(55) in tRNA = pseudouridine(55) in tRNA. Responsible for synthesis of pseudouridine from uracil-55 in the psi GC loop of transfer RNAs. This Streptomyces griseus subsp. griseus (strain JCM 4626 / CBS 651.72 / NBRC 13350 / KCC S-0626 / ISP 5235) protein is tRNA pseudouridine synthase B.